A 140-amino-acid polypeptide reads, in one-letter code: Sex-regulated protein janus-B (140 aa).

Arginine 42 lines the substrate pocket. Catalysis depends on histidine 69, which acts as the Proton acceptor. A substrate-binding site is contributed by 110-112 (SRT).

Belongs to the janus family.

JanA and janB regulate somatic sex differentiation. The sequence is that of Sex-regulated protein janus-B (janB) from Drosophila sechellia (Fruit fly).